We begin with the raw amino-acid sequence, 304 residues long: MSASTALPVRDRLRIAIQKSGRLTEPARRLLTACGLSWRQSRDKLFCYGESLPVDLLLVRDDDIPGLIAQGVCDLGIVGRNELDEQAASRRRNGLPVPYQTLRGLHFGQCRLMLAVPEEWEWQDISQLTGKRIATSYPAILTDWLQTHHIAAQIVELSGSVEIAPRLGTADLICDLVSSGATLAAHQLKPVIQIMESQAVLAGMIRQPADARAGLLAMLLRRMDGLLTLRDSNLLMFRAFQEHLDALTHLLPDADPLVQLPDDGSGTLRVQTMCHGTITWQRLEELERAGAQGLMVLTVERSLA.

It belongs to the ATP phosphoribosyltransferase family. Long subfamily. The cofactor is Mg(2+).

The protein localises to the cytoplasm. The catalysed reaction is 1-(5-phospho-beta-D-ribosyl)-ATP + diphosphate = 5-phospho-alpha-D-ribose 1-diphosphate + ATP. The protein operates within amino-acid biosynthesis; L-histidine biosynthesis; L-histidine from 5-phospho-alpha-D-ribose 1-diphosphate: step 1/9. Its activity is regulated as follows. Feedback inhibited by histidine. Catalyzes the condensation of ATP and 5-phosphoribose 1-diphosphate to form N'-(5'-phosphoribosyl)-ATP (PR-ATP). Has a crucial role in the pathway because the rate of histidine biosynthesis seems to be controlled primarily by regulation of HisG enzymatic activity. The protein is ATP phosphoribosyltransferase of Xylella fastidiosa (strain 9a5c).